Reading from the N-terminus, the 185-residue chain is Ribosome-recycling factor (185 aa).

Belongs to the RRF family.

The protein localises to the cytoplasm. Responsible for the release of ribosomes from messenger RNA at the termination of protein biosynthesis. May increase the efficiency of translation by recycling ribosomes from one round of translation to another. The protein is Ribosome-recycling factor of Campylobacter jejuni subsp. jejuni serotype O:2 (strain ATCC 700819 / NCTC 11168).